The following is a 238-amino-acid chain: uncharacterized protein (238 aa).

Positions 1–19 (MKINLFFVFLFELLHFVAA) are cleaved as a signal peptide. The Lumenal portion of the chain corresponds to 20–197 (YSCEGDESAA…LALYGHLSQK (178 aa)). A helical membrane pass occupies residues 198 to 216 (YTPLGMNVAIFGISAYIMY). Topologically, residues 217–238 (RSSKKAKQKQAAAAAAAAAKKK) are cytoplasmic.

Its subcellular location is the endoplasmic reticulum membrane. This is an uncharacterized protein from Schizosaccharomyces pombe (strain 972 / ATCC 24843) (Fission yeast).